The primary structure comprises 194 residues: Ribonuclease HII (194 aa).

Positions 3–193 constitute an RNase H type-2 domain; sequence ILTAGVDEAG…VRNLLAQQTL (191 aa). A divalent metal cation is bound by residues aspartate 9, glutamate 10, and aspartate 101.

The protein belongs to the RNase HII family. Mn(2+) serves as cofactor. The cofactor is Mg(2+).

It localises to the cytoplasm. It carries out the reaction Endonucleolytic cleavage to 5'-phosphomonoester.. Its function is as follows. Endonuclease that specifically degrades the RNA of RNA-DNA hybrids. The sequence is that of Ribonuclease HII from Neisseria meningitidis serogroup C (strain 053442).